Reading from the N-terminus, the 375-residue chain is tRNA-specific 2-thiouridylase MnmA (375 aa).

ATP contacts are provided by residues 16-23 (GMSGGVDS) and Met42. The interaction with target base in tRNA stretch occupies residues 102–104 (NPD). The active-site Nucleophile is Cys107. Cys107 and Cys203 form a disulfide bridge. Gly131 is a binding site for ATP. Residues 153 to 155 (KDQ) form an interaction with tRNA region. Cys203 functions as the Cysteine persulfide intermediate in the catalytic mechanism. Residues 315–316 (RY) are interaction with tRNA.

This sequence belongs to the MnmA/TRMU family.

It is found in the cytoplasm. The enzyme catalyses S-sulfanyl-L-cysteinyl-[protein] + uridine(34) in tRNA + AH2 + ATP = 2-thiouridine(34) in tRNA + L-cysteinyl-[protein] + A + AMP + diphosphate + H(+). In terms of biological role, catalyzes the 2-thiolation of uridine at the wobble position (U34) of tRNA, leading to the formation of s(2)U34. The polypeptide is tRNA-specific 2-thiouridylase MnmA (Pseudomonas aeruginosa (strain LESB58)).